The following is a 617-amino-acid chain: DNA mismatch repair protein MutL (617 aa).

Belongs to the DNA mismatch repair MutL/HexB family.

Functionally, this protein is involved in the repair of mismatches in DNA. It is required for dam-dependent methyl-directed DNA mismatch repair. May act as a 'molecular matchmaker', a protein that promotes the formation of a stable complex between two or more DNA-binding proteins in an ATP-dependent manner without itself being part of a final effector complex. This chain is DNA mismatch repair protein MutL, found in Bartonella tribocorum (strain CIP 105476 / IBS 506).